A 104-amino-acid polypeptide reads, in one-letter code: Protein MGF 110-2L (104 aa).

The signal sequence occupies residues 1–19 (MRFFSYLGLLLAGLASLQG).

This sequence belongs to the asfivirus MGF 110 family.

Plays a role in virus cell tropism, and may be required for efficient virus replication in macrophages. This is Protein MGF 110-2L from African swine fever virus (isolate Tick/South Africa/Pretoriuskop Pr4/1996) (ASFV).